The sequence spans 113 residues: Large ribosomal subunit protein P2 (113 aa).

The segment at 60–113 is disordered; sequence SKVSSLSAGAGPSGGAAAAGADAGAAEAEKEEEPQEEEADVNMGDIFGGDDEDY. The segment covering 74 to 85 has biased composition (low complexity); sequence GAAAAGADAGAA. A compositionally biased stretch (acidic residues) spans 88–99; it reads EKEEEPQEEEAD.

The protein belongs to the eukaryotic ribosomal protein P1/P2 family. P1 and P2 exist as dimers at the large ribosomal subunit. In terms of processing, phosphorylated.

In terms of biological role, plays an important role in the elongation step of protein synthesis. This is Large ribosomal subunit protein P2 from Euplotes raikovi.